The sequence spans 436 residues: UPF0597 protein YhaM (436 aa).

Belongs to the UPF0597 family.

The polypeptide is UPF0597 protein YhaM (Salmonella heidelberg (strain SL476)).